The following is a 174-amino-acid chain: Crossover junction endodeoxyribonuclease RuvC (174 aa).

Active-site residues include D8, E68, and D140. Residues D8, E68, and D140 each contribute to the Mg(2+) site.

Belongs to the RuvC family. In terms of assembly, homodimer which binds Holliday junction (HJ) DNA. The HJ becomes 2-fold symmetrical on binding to RuvC with unstacked arms; it has a different conformation from HJ DNA in complex with RuvA. In the full resolvosome a probable DNA-RuvA(4)-RuvB(12)-RuvC(2) complex forms which resolves the HJ. Requires Mg(2+) as cofactor.

The protein localises to the cytoplasm. It carries out the reaction Endonucleolytic cleavage at a junction such as a reciprocal single-stranded crossover between two homologous DNA duplexes (Holliday junction).. In terms of biological role, the RuvA-RuvB-RuvC complex processes Holliday junction (HJ) DNA during genetic recombination and DNA repair. Endonuclease that resolves HJ intermediates. Cleaves cruciform DNA by making single-stranded nicks across the HJ at symmetrical positions within the homologous arms, yielding a 5'-phosphate and a 3'-hydroxyl group; requires a central core of homology in the junction. The consensus cleavage sequence is 5'-(A/T)TT(C/G)-3'. Cleavage occurs on the 3'-side of the TT dinucleotide at the point of strand exchange. HJ branch migration catalyzed by RuvA-RuvB allows RuvC to scan DNA until it finds its consensus sequence, where it cleaves and resolves the cruciform DNA. This chain is Crossover junction endodeoxyribonuclease RuvC, found in Legionella pneumophila (strain Corby).